A 462-amino-acid polypeptide reads, in one-letter code: Tubulin alpha-4 chain (462 aa).

Residues Gln-11, Glu-82, Ser-151, Gly-155, Thr-156, Thr-190, Asn-217, and Asn-239 each contribute to the GTP site. Residue Glu-82 coordinates Mg(2+). The active site involves Glu-265.

It belongs to the tubulin family. Dimer of alpha and beta chains. A typical microtubule is a hollow water-filled tube with an outer diameter of 25 nm and an inner diameter of 15 nM. Alpha-beta heterodimers associate head-to-tail to form protofilaments running lengthwise along the microtubule wall with the beta-tubulin subunit facing the microtubule plus end conferring a structural polarity. Microtubules usually have 13 protofilaments but different protofilament numbers can be found in some organisms and specialized cells. Mg(2+) is required as a cofactor.

It localises to the cytoplasm. The protein localises to the cytoskeleton. It catalyses the reaction GTP + H2O = GDP + phosphate + H(+). Tubulin is the major constituent of microtubules, a cylinder consisting of laterally associated linear protofilaments composed of alpha- and beta-tubulin heterodimers. Microtubules grow by the addition of GTP-tubulin dimers to the microtubule end, where a stabilizing cap forms. Below the cap, tubulin dimers are in GDP-bound state, owing to GTPase activity of alpha-tubulin. This chain is Tubulin alpha-4 chain (alphaTub67C), found in Drosophila melanogaster (Fruit fly).